Here is an 804-residue protein sequence, read N- to C-terminus: DNA mismatch repair protein MutS (804 aa).

An ATP-binding site is contributed by 614 to 621 (GPNMAGKS).

This sequence belongs to the DNA mismatch repair MutS family.

In terms of biological role, this protein is involved in the repair of mismatches in DNA. It is possible that it carries out the mismatch recognition step. This protein has a weak ATPase activity. This Ehrlichia ruminantium (strain Welgevonden) protein is DNA mismatch repair protein MutS.